The chain runs to 656 residues: Chaperone protein DnaK (656 aa).

Disordered stretches follow at residues 488–532 and 579–656; these read EMQE…DAVD and YQQQ…DEDE. A compositionally biased stretch (basic and acidic residues) spans 492 to 513; sequence EAEKHAEEDEKRRERIEARNEA. A compositionally biased stretch (acidic residues) spans 523 to 532; that stretch reads LLDENEDAVD. Positions 584 to 635 are enriched in gly residues; that stretch reads GEGGAGAGAGAAGGMGGAGPGGMGGAGPGGMGGAGPGGMGGAGPGAGAGQQG. Residues 636-656 show a composition bias toward acidic residues; it reads DGEEFVDADFEDVDDEDDEDE.

It belongs to the heat shock protein 70 family.

Functionally, acts as a chaperone. The sequence is that of Chaperone protein DnaK from Natronomonas pharaonis (strain ATCC 35678 / DSM 2160 / CIP 103997 / JCM 8858 / NBRC 14720 / NCIMB 2260 / Gabara) (Halobacterium pharaonis).